The following is a 201-amino-acid chain: Acyl-homoserine-lactone synthase (201 aa).

It belongs to the autoinducer synthase family.

The catalysed reaction is a fatty acyl-[ACP] + S-adenosyl-L-methionine = an N-acyl-L-homoserine lactone + S-methyl-5'-thioadenosine + holo-[ACP] + H(+). Required for the synthesis of PAI consisting of 3-oxo-N-(tetrahydro-2-oxo-3-furanyl)-dodecanamide also known as N-(3-oxododecanoyl)homoserine lactone, an autoinducer molecule which binds to LasR and thus acts in elastase biosynthesis regulation. In Pseudomonas aeruginosa (strain ATCC 15692 / DSM 22644 / CIP 104116 / JCM 14847 / LMG 12228 / 1C / PRS 101 / PAO1), this protein is Acyl-homoserine-lactone synthase (lasI).